The chain runs to 871 residues: Alanine--tRNA ligase (871 aa).

Zn(2+) contacts are provided by His561, His565, Cys665, and His669.

Belongs to the class-II aminoacyl-tRNA synthetase family. The cofactor is Zn(2+).

It is found in the cytoplasm. The enzyme catalyses tRNA(Ala) + L-alanine + ATP = L-alanyl-tRNA(Ala) + AMP + diphosphate. Its function is as follows. Catalyzes the attachment of alanine to tRNA(Ala) in a two-step reaction: alanine is first activated by ATP to form Ala-AMP and then transferred to the acceptor end of tRNA(Ala). Also edits incorrectly charged Ser-tRNA(Ala) and Gly-tRNA(Ala) via its editing domain. This is Alanine--tRNA ligase from Dehalococcoides mccartyi (strain CBDB1).